The sequence spans 159 residues: Cytochrome c-type biogenesis CcmH-like mitochondrial protein (159 aa).

Residues 1–82 (MEKTDEERKK…ETVLYAPKFD (82 aa)) are Mitochondrial intermembrane-facing. Positions 27 and 30 each coordinate heme. The chain crosses the membrane as a helical span at residues 83–105 (LQTAALWLTPVIIAGGTAAGIVY). Topologically, residues 106-159 (QKHRLRKNVDIMALNLIRGVPLTPKERVTILDVLIPPSPPPQGVVSRLRRWLNR) are mitochondrial matrix.

Belongs to the CcmH/CycL/Ccl2/NrfF family. As to quaternary structure, interacts (via N-terminus) with CYTC-1. Interacts with CCMFN1 and CCMFN2.

It is found in the mitochondrion inner membrane. In terms of biological role, plays a central role in mitochondrial cytochrome c maturation. Probable component of a heme lyase complex involved in the reduction of apocytochrome c. Forms a complex with CCMF proteins (CCMFC, CCMFN1 and CCMFN2) that performs the assembly of heme with c-type apocytochromes in mitochondria. The polypeptide is Cytochrome c-type biogenesis CcmH-like mitochondrial protein (Arabidopsis thaliana (Mouse-ear cress)).